Reading from the N-terminus, the 124-residue chain is Small ribosomal subunit protein bS6 (124 aa).

Residues 97-124 (TGPSPMMKEVQREEAKKAAAAQPTEAQA) form a disordered region. The segment covering 114–124 (AAAAQPTEAQA) has biased composition (low complexity).

Belongs to the bacterial ribosomal protein bS6 family.

Its function is as follows. Binds together with bS18 to 16S ribosomal RNA. In Paraburkholderia phymatum (strain DSM 17167 / CIP 108236 / LMG 21445 / STM815) (Burkholderia phymatum), this protein is Small ribosomal subunit protein bS6.